We begin with the raw amino-acid sequence, 564 residues long: Dihydroxy-acid dehydratase (564 aa).

Basic residues predominate over residues 1–10 (MTDTRTKRRM). Residues 1-23 (MTDTRTKRRMNWNSHHITQGDER) are disordered. Residue cysteine 57 coordinates [2Fe-2S] cluster. Aspartate 89 contacts Mg(2+). Cysteine 130 contacts [2Fe-2S] cluster. Residues aspartate 131 and lysine 132 each contribute to the Mg(2+) site. At lysine 132 the chain carries N6-carboxylysine. Position 202 (cysteine 202) interacts with [2Fe-2S] cluster. Glutamate 454 contacts Mg(2+). Serine 480 functions as the Proton acceptor in the catalytic mechanism.

This sequence belongs to the IlvD/Edd family. Homodimer. Requires [2Fe-2S] cluster as cofactor. The cofactor is Mg(2+).

The catalysed reaction is (2R)-2,3-dihydroxy-3-methylbutanoate = 3-methyl-2-oxobutanoate + H2O. It catalyses the reaction (2R,3R)-2,3-dihydroxy-3-methylpentanoate = (S)-3-methyl-2-oxopentanoate + H2O. It participates in amino-acid biosynthesis; L-isoleucine biosynthesis; L-isoleucine from 2-oxobutanoate: step 3/4. It functions in the pathway amino-acid biosynthesis; L-valine biosynthesis; L-valine from pyruvate: step 3/4. In terms of biological role, functions in the biosynthesis of branched-chain amino acids. Catalyzes the dehydration of (2R,3R)-2,3-dihydroxy-3-methylpentanoate (2,3-dihydroxy-3-methylvalerate) into 2-oxo-3-methylpentanoate (2-oxo-3-methylvalerate) and of (2R)-2,3-dihydroxy-3-methylbutanoate (2,3-dihydroxyisovalerate) into 2-oxo-3-methylbutanoate (2-oxoisovalerate), the penultimate precursor to L-isoleucine and L-valine, respectively. This Deinococcus geothermalis (strain DSM 11300 / CIP 105573 / AG-3a) protein is Dihydroxy-acid dehydratase.